A 141-amino-acid polypeptide reads, in one-letter code: MSDVESADNNVVVEEKAVFDNVTAIQKVIKNAHVHDGLKIGIREVIKSIESQEAKVCFLSDVCSEPAYKKLITTLCAEKNIPLFMVQNDSKDLGHWAGLFKLDNEGNARKIIGASSVAVVDFGEDSAEKDFLLSQNQTVTA.

It belongs to the eukaryotic ribosomal protein eS12 family. In terms of assembly, component of the small ribosomal subunit. Mature ribosomes consist of a small (40S) and a large (60S) subunit. The 40S subunit contains about 32 different proteins and 1 molecule of RNA (18S). The 60S subunit contains about 42 different proteins and 3 molecules of RNA (28S, 5.8S and 5S).

It is found in the cytoplasm. Functionally, component of the ribosome, a large ribonucleoprotein complex responsible for the synthesis of proteins in the cell. The small ribosomal subunit (SSU) binds messenger RNAs (mRNAs) and translates the encoded message by selecting cognate aminoacyl-transfer RNA (tRNA) molecules. The large subunit (LSU) contains the ribosomal catalytic site termed the peptidyl transferase center (PTC), which catalyzes the formation of peptide bonds, thereby polymerizing the amino acids delivered by tRNAs into a polypeptide chain. The nascent polypeptides leave the ribosome through a tunnel in the LSU and interact with protein factors that function in enzymatic processing, targeting, and the membrane insertion of nascent chains at the exit of the ribosomal tunnel. The polypeptide is Small ribosomal subunit protein eS12 (Plasmodium falciparum (isolate 3D7)).